A 292-amino-acid chain; its full sequence is 33 kDa chaperonin (292 aa).

2 disulfide bridges follow: C230–C232 and C263–C266.

It belongs to the HSP33 family. Under oxidizing conditions two disulfide bonds are formed involving the reactive cysteines. Under reducing conditions zinc is bound to the reactive cysteines and the protein is inactive.

It localises to the cytoplasm. Redox regulated molecular chaperone. Protects both thermally unfolding and oxidatively damaged proteins from irreversible aggregation. Plays an important role in the bacterial defense system toward oxidative stress. The protein is 33 kDa chaperonin of Escherichia coli O7:K1 (strain IAI39 / ExPEC).